A 160-amino-acid chain; its full sequence is Nucleotide-binding protein Noc_2254 (160 aa).

It belongs to the YajQ family.

Its function is as follows. Nucleotide-binding protein. This chain is Nucleotide-binding protein Noc_2254, found in Nitrosococcus oceani (strain ATCC 19707 / BCRC 17464 / JCM 30415 / NCIMB 11848 / C-107).